The chain runs to 1342 residues: DNA-directed RNA polymerase subunit beta (1342 aa).

The protein belongs to the RNA polymerase beta chain family. As to quaternary structure, the RNAP catalytic core consists of 2 alpha, 1 beta, 1 beta' and 1 omega subunit. When a sigma factor is associated with the core the holoenzyme is formed, which can initiate transcription.

It carries out the reaction RNA(n) + a ribonucleoside 5'-triphosphate = RNA(n+1) + diphosphate. Functionally, DNA-dependent RNA polymerase catalyzes the transcription of DNA into RNA using the four ribonucleoside triphosphates as substrates. This is DNA-directed RNA polymerase subunit beta from Colwellia psychrerythraea (strain 34H / ATCC BAA-681) (Vibrio psychroerythus).